A 234-amino-acid polypeptide reads, in one-letter code: Two-component response regulator ARR9 (234 aa).

In terms of domain architecture, Response regulatory spans 10–147 (HVLAVDDSLF…DLNKLKPHMM (138 aa)). The residue at position 80 (Asp-80) is a 4-aspartylphosphate.

This sequence belongs to the ARR family. Type-A subfamily. Interacts with AHP1 and AHP3. In terms of processing, two-component system major event consists of a His-to-Asp phosphorelay between a sensor histidine kinase (HK) and a response regulator (RR). In plants, the His-to-Asp phosphorelay involves an additional intermediate named Histidine-containing phosphotransfer protein (HPt). This multistep phosphorelay consists of a His-Asp-His-Asp sequential transfer of a phosphate group between first a His and an Asp of the HK protein, followed by the transfer to a conserved His of the HPt protein and finally the transfer to an Asp in the receiver domain of the RR protein. As to expression, predominantly expressed in roots.

The protein localises to the nucleus. Functions as a response regulator involved in His-to-Asp phosphorelay signal transduction system. Phosphorylation of the Asp residue in the receiver domain activates the ability of the protein to promote the transcription of target genes. Type-A response regulators seem to act as negative regulators of the cytokinin signaling. This is Two-component response regulator ARR9 (ARR9) from Arabidopsis thaliana (Mouse-ear cress).